A 315-amino-acid chain; its full sequence is Petrobactin import system permease protein YclO (315 aa).

9 helical membrane passes run 7-27, 40-60, 76-96, 100-120, 128-148, 172-192, 223-243, 262-282, and 288-308; these read IALLVGLAIVCIGLFLFYDLG, VAAIVLTGGAIAFSTMIFQTI, LYMLIQTGIIFLFGSANMVIM, INFIISVLLMILFSLVLYQIM, IFFLLLIGIVFGTLFSSLSSF, INTDLLWLAFIIFLLTGVYVW, LIVVAILVSVSTALVGPIMFL, YLIAGSVFISIIALVGGQFVV, and FSTTLSVIINFAGGIYFIYLL.

The protein belongs to the binding-protein-dependent transport system permease family. FecCD subfamily. The complex is composed of two ATP-binding proteins (YclP), two transmembrane proteins (YclN and YclO) and a solute-binding protein (YclQ).

The protein resides in the cell membrane. Part of the ABC transporter complex YclNOPQ involved in uptake of ferric-petrobactin. Petrobactin is a photoreactive 3,4-catecholate siderophore produced by many members of the B.cereus group, including B.anthracis. Probably responsible for the translocation of the substrate across the membrane. In Bacillus subtilis (strain 168), this protein is Petrobactin import system permease protein YclO (yclO).